The following is a 512-amino-acid chain: Protein male-specific lethal-3 (512 aa).

Residues Phe11–Ala90 enclose the Chromo domain. The disordered stretch occupies residues Tyr98–Arg175. A compositionally biased stretch (basic and acidic residues) spans Arg149 to Leu169. An MRG domain is found at Gln196–Gln500.

Component of the male-specific lethal (MSL) histone acetyltransferase complex, composed of mof, mle, msl-1, msl-2 and msl-3 proteins, as well as roX1 and roX2 non-coding RNAs. Component of a maternal MSL subcomplex composed of mof, msl-1 and msl-3. Ubiquitinated by msl-2.

It localises to the nucleus. It is found in the chromosome. Component of the male-specific lethal (MSL) histone acetyltransferase complex, a multiprotein complex essential for elevating transcription of the single X chromosome in the male (X chromosome dosage compensation). The MSL complex specifically associates with the single X chromosome in males and mediates formation of H4K16ac, promoting a two-fold activation of X chromosome. Acts as a histone reader that specifically recognizes and binds histone H3 trimethylated at 'Lys-36' (H3K36me3) and histone H4 monomethylated at 'Lys-20' (H4K20me1). Within the MSL complex, mediates the spreading of the MSL complex from initiation sites on the male X chromosome to flanking chromatin. Following initial recruitment of the MSL complex to male X chromosome by msl-2, msl-3 binds H3K36me3 and promotes spreading of the MSL complex in cis. In addition to its role in dosage compensation in males, promotes germline stem cell differentiation in females: recognizes and binds H3K36me3, promoting recruitment of the ATAC complex and transcription of genes, such as RpS19b. The protein is Protein male-specific lethal-3 of Drosophila melanogaster (Fruit fly).